The sequence spans 187 residues: UPF0340 protein SPN23F05980 (187 aa).

It belongs to the UPF0340 family.

The sequence is that of UPF0340 protein SPN23F05980 from Streptococcus pneumoniae (strain ATCC 700669 / Spain 23F-1).